The chain runs to 127 residues: Large ribosomal subunit protein bL17 (127 aa).

Belongs to the bacterial ribosomal protein bL17 family. In terms of assembly, part of the 50S ribosomal subunit. Contacts protein L32.

This Leuconostoc mesenteroides subsp. mesenteroides (strain ATCC 8293 / DSM 20343 / BCRC 11652 / CCM 1803 / JCM 6124 / NCDO 523 / NBRC 100496 / NCIMB 8023 / NCTC 12954 / NRRL B-1118 / 37Y) protein is Large ribosomal subunit protein bL17.